Consider the following 245-residue polypeptide: Probable phosphatase KPK_3500 (245 aa).

The Zn(2+) site is built by histidine 7, histidine 9, histidine 15, histidine 40, glutamate 73, histidine 101, histidine 131, aspartate 192, and histidine 194.

Belongs to the PHP family. As to quaternary structure, homotrimer. The cofactor is Zn(2+).

In Klebsiella pneumoniae (strain 342), this protein is Probable phosphatase KPK_3500.